Consider the following 113-residue polypeptide: U11-theraphotoxin-Hhn1a (113 aa).

Positions 1-21 (MNTVRVTFLLVFVLAVSLGRA) are cleaved as a signal peptide. The propeptide occupies 22–74 (DKEENRMEMQEKTEQGKSYLDFAENLLLQKLEELEAKLLEEDSEESRNSRQKR). The segment at 61 to 83 (EEDSEESRNSRQKRCIGEGVPCD) is disordered. 3 disulfide bridges follow: Cys-75-Cys-90, Cys-82-Cys-95, and Cys-89-Cys-110.

The protein belongs to the neurotoxin 14 (magi-1) family. 01 (HNTX-16) subfamily. Expressed by the venom gland.

It localises to the secreted. Its function is as follows. Probable ion channel inhibitor. This Cyriopagopus hainanus (Chinese bird spider) protein is U11-theraphotoxin-Hhn1a.